Consider the following 94-residue polypeptide: Lipolysis-activating peptide 1-beta chain (94 aa).

The N-terminal stretch at 1 to 19 (MKILAVVLISVIVLNTANG) is a signal peptide. The LCN-type CS-alpha/beta domain occupies 20 to 87 (ENYYPQKYTN…FFNALESQCP (68 aa)). 3 disulfides stabilise this stretch: C34/C56, C42/C66, and C46/C68.

The protein belongs to the long (3 C-C) scorpion toxin superfamily. Homodimer; disulfide-linked or monomer (edited version) or heterodimer of an alpha chain (AC D9U299 or AC D9U2A4) and this beta chain (non-edited version). Expressed by the venom gland.

The protein resides in the secreted. Its function is as follows. The homodimer inhibits HMG-CoA reductase (HMGCR) (32% of inhibition produced by 0.6 uM), a glycoprotein involved in the control of cholesterol biosynthesis. The inhibitory effects of bumarsin are seen at much lower concentrations (0.6 uM) than that for statins such as atorvastatin (5 mM) and simvastatin (10 uM). In addition to inhibition of HMG-CoA reductase, this protein lowers cholesterol levels by inducing steroid hormone synthesis via StAR, and by increasing reverse cholesterol transport mediated by the induction of ABCA1 and APOA1. In terms of biological role, the heterodimer non-edited LVP1 induces lipolysis in rat adipocytes. Induction of lipolysis by LVP1 appears to be mediated through the beta-2 adrenergic receptor pathway (ADRB2). The monomer edited version, similar to alpha-toxins, may modulate voltage-gated sodium channels (Nav) and may block voltage-gated potassium channels (Kv). The sequence is that of Lipolysis-activating peptide 1-beta chain from Lychas mucronatus (Chinese swimming scorpion).